A 661-amino-acid chain; its full sequence is COBRA-like protein 7 (661 aa).

The N-terminal stretch at 1–26 (MDSAPNFIPRLLLLSLLIVSIPLTSS) is a signal peptide. The disordered stretch occupies residues 26-45 (SQSDANTTNPSPSPPSDSDL). Asn31, Asn64, Asn122, Asn170, Asn314, Asn327, Asn356, Asn369, Asn398, Asn410, Asn430, Asn472, Asn551, and Asn561 each carry an N-linked (GlcNAc...) asparagine glycan. The GPI-anchor amidated serine moiety is linked to residue Ser637. A propeptide spans 638-661 (SQHRKHISVFLLALPVLALLILRA) (removed in mature form).

It belongs to the COBRA family. As to expression, expressed in roots, stems, leaves, flowers and siliques.

It localises to the cell membrane. The sequence is that of COBRA-like protein 7 (COBL7) from Arabidopsis thaliana (Mouse-ear cress).